The chain runs to 118 residues: Ribulose bisphosphate carboxylase small subunit (118 aa).

Belongs to the RuBisCO small chain family. In terms of assembly, heterohexadecamer of 8 large and 8 small subunits.

In terms of biological role, ruBisCO catalyzes two reactions: the carboxylation of D-ribulose 1,5-bisphosphate, the primary event in carbon dioxide fixation, as well as the oxidative fragmentation of the pentose substrate. Both reactions occur simultaneously and in competition at the same active site. Although the small subunit is not catalytic it is essential for maximal activity. This Thiobacillus denitrificans (strain ATCC 25259 / T1) protein is Ribulose bisphosphate carboxylase small subunit.